The primary structure comprises 306 residues: N-acetylmuramic acid 6-phosphate etherase (306 aa).

Residues 62–225 form the SIS domain; it reads IAQAFQNGGR…TTASMIRIGK (164 aa). Glu-90 functions as the Proton donor in the catalytic mechanism. Residue Glu-121 is part of the active site.

This sequence belongs to the GCKR-like family. MurNAc-6-P etherase subfamily. In terms of assembly, homodimer.

It carries out the reaction N-acetyl-D-muramate 6-phosphate + H2O = N-acetyl-D-glucosamine 6-phosphate + (R)-lactate. It participates in amino-sugar metabolism; 1,6-anhydro-N-acetylmuramate degradation. The protein operates within amino-sugar metabolism; N-acetylmuramate degradation. Its pathway is cell wall biogenesis; peptidoglycan recycling. Its function is as follows. Specifically catalyzes the cleavage of the D-lactyl ether substituent of MurNAc 6-phosphate, producing GlcNAc 6-phosphate and D-lactate. Together with AnmK, is also required for the utilization of anhydro-N-acetylmuramic acid (anhMurNAc) either imported from the medium or derived from its own cell wall murein, and thus plays a role in cell wall recycling. The protein is N-acetylmuramic acid 6-phosphate etherase of Vibrio atlanticus (strain LGP32) (Vibrio splendidus (strain Mel32)).